We begin with the raw amino-acid sequence, 206 residues long: Small ribosomal subunit protein uS4A (206 aa).

Residues 98-164 (MRLDNVVYKL…EKFKTFAENP (67 aa)) form the S4 RNA-binding domain.

The protein belongs to the universal ribosomal protein uS4 family. In terms of assembly, part of the 30S ribosomal subunit. Contacts protein S5. The interaction surface between S4 and S5 is involved in control of translational fidelity.

One of the primary rRNA binding proteins, it binds directly to 16S rRNA where it nucleates assembly of the body of the 30S subunit. In terms of biological role, with S5 and S12 plays an important role in translational accuracy. This Clostridium novyi (strain NT) protein is Small ribosomal subunit protein uS4A.